Consider the following 202-residue polypeptide: Alpha-S1-casein (202 aa).

2 disordered regions span residues arginine 1–glutamate 25 and leucine 51–isoleucine 84. Basic and acidic residues-rich tracts occupy residues glutamine 16–glutamate 25 and leucine 51–leucine 63. Serine 18 bears the Phosphoserine mark. Residues glutamine 70–glutamate 80 show a composition bias toward low complexity. A phosphoserine mark is found at serine 72, serine 73, serine 74, serine 76, serine 77, and serine 78.

Belongs to the alpha-casein family. Mammary gland specific. Secreted in milk.

The protein localises to the secreted. Important role in the capacity of milk to transport calcium phosphate. This chain is Alpha-S1-casein, found in Equus asinus (Donkey).